Consider the following 161-residue polypeptide: S-ribosylhomocysteine lyase (161 aa).

Fe cation is bound by residues His53, His57, and Cys124.

It belongs to the LuxS family. As to quaternary structure, homodimer. It depends on Fe cation as a cofactor.

It carries out the reaction S-(5-deoxy-D-ribos-5-yl)-L-homocysteine = (S)-4,5-dihydroxypentane-2,3-dione + L-homocysteine. Its function is as follows. Involved in the synthesis of autoinducer 2 (AI-2) which is secreted by bacteria and is used to communicate both the cell density and the metabolic potential of the environment. The regulation of gene expression in response to changes in cell density is called quorum sensing. Catalyzes the transformation of S-ribosylhomocysteine (RHC) to homocysteine (HC) and 4,5-dihydroxy-2,3-pentadione (DPD). This chain is S-ribosylhomocysteine lyase, found in Phocaeicola vulgatus (strain ATCC 8482 / DSM 1447 / JCM 5826 / CCUG 4940 / NBRC 14291 / NCTC 11154) (Bacteroides vulgatus).